A 626-amino-acid chain; its full sequence is Lipid-A-disaccharide synthase (626 aa).

The segment at 1–225 (MLPLYLVHVL…YKKSRLPKFH (225 aa)) is unknown. The segment at 226–626 (SPSCFLSAGE…KEFHPKSSRA (401 aa)) is lipid-A-disaccharide synthase.

The protein in the C-terminal section; belongs to the LpxB family.

The enzyme catalyses a lipid X + a UDP-2-N,3-O-bis[(3R)-3-hydroxyacyl]-alpha-D-glucosamine = a lipid A disaccharide + UDP + H(+). It functions in the pathway bacterial outer membrane biogenesis; LPS lipid A biosynthesis. In terms of biological role, condensation of UDP-2,3-diacylglucosamine and 2,3-diacylglucosamine-1-phosphate to form lipid A disaccharide, a precursor of lipid A, a phosphorylated glycolipid that anchors the lipopolysaccharide to the outer membrane of the cell. The sequence is that of Lipid-A-disaccharide synthase (lpxB) from Chlamydia caviae (strain ATCC VR-813 / DSM 19441 / 03DC25 / GPIC) (Chlamydophila caviae).